The chain runs to 1334 residues: Lysine-specific demethylase 3A-B (1334 aa).

Disordered regions lie at residues 243-288, 352-382, and 514-533; these read DQND…KTSF, PGIQ…SQNL, and KPQE…VTYP. A compositionally biased stretch (basic and acidic residues) spans 267-283; that stretch reads TEVKQTRNEEVPSKDVT. Residues 684 to 709 form a C6-type zinc finger; sequence CDACDTTIFNLHWVCPKCGFGVCVDC. The LXXLL motif signature appears at 897 to 901; sequence LRNLL. Residues 1089-1294 form the JmjC domain; that stretch reads RREGKLNLAA…HCFCLTQEFR (206 aa). 3 residues coordinate Fe cation: His-1133, Asp-1135, and His-1262.

It belongs to the JHDM2 histone demethylase family. The cofactor is Fe(2+).

It is found in the cytoplasm. It localises to the nucleus. It carries out the reaction N(6),N(6)-dimethyl-L-lysyl(9)-[histone H3] + 2 2-oxoglutarate + 2 O2 = L-lysyl(9)-[histone H3] + 2 formaldehyde + 2 succinate + 2 CO2. Functionally, histone demethylase that specifically demethylates 'Lys-9' of histone H3, thereby playing a central role in histone code. Preferentially demethylates mono- and dimethylated H3 'Lys-9' residue, with a preference for dimethylated residue, while it has weak or no activity on trimethylated H3 'Lys-9'. Demethylation of Lys residue generates formaldehyde and succinate. The protein is Lysine-specific demethylase 3A-B (kdm3a-b) of Xenopus laevis (African clawed frog).